The primary structure comprises 463 residues: Asparagine--tRNA ligase (463 aa).

Belongs to the class-II aminoacyl-tRNA synthetase family. In terms of assembly, homodimer.

It is found in the cytoplasm. The catalysed reaction is tRNA(Asn) + L-asparagine + ATP = L-asparaginyl-tRNA(Asn) + AMP + diphosphate + H(+). This chain is Asparagine--tRNA ligase, found in Acholeplasma laidlawii (strain PG-8A).